The following is a 472-amino-acid chain: Trigger factor (472 aa).

The region spanning 172–257 (GDEVRFDFKG…IKEITSVKPQ (86 aa)) is the PPIase FKBP-type domain. 2 stretches are compositionally biased toward polar residues: residues 439 to 449 (NQPKDTASTLS) and 461 to 472 (KTSNTKKVASKK). Positions 439–472 (NQPKDTASTLSKQEDKPKVAKAKTSNTKKVASKK) are disordered.

The protein belongs to the FKBP-type PPIase family. Tig subfamily.

Its subcellular location is the cytoplasm. It catalyses the reaction [protein]-peptidylproline (omega=180) = [protein]-peptidylproline (omega=0). In terms of biological role, involved in protein export. Acts as a chaperone by maintaining the newly synthesized protein in an open conformation. Functions as a peptidyl-prolyl cis-trans isomerase. The chain is Trigger factor from Ureaplasma urealyticum serovar 10 (strain ATCC 33699 / Western).